The primary structure comprises 295 residues: MSNLKDIKRKIKSVQNTQKTTRAMKLVSTAKLRKAEEAARYSRVYALKINEVLSEIAYKINQYASVMTESKFFNTTKSVEKVDIIFVTADKGLCGGFNVQTIKTVRRMIDELKAKKIKVRLRAVGKKGIEFFNFQGVELLETYVGASSSPTYEKAQKIIKDAIDDFTNGITDKVVLIHNGYKNMISQEIRVNDIVPIEPSKIVAVETNSLMEFEPEDNYTKIMDELLNKYFEYSMYYALVDSLAAEHSARMQAMDNATNNAKQRVKQLNLAYNKARQESITTELIEIISGVESMK.

The protein belongs to the ATPase gamma chain family. F-type ATPases have 2 components, CF(1) - the catalytic core - and CF(0) - the membrane proton channel. CF(1) has five subunits: alpha(3), beta(3), gamma(1), delta(1), epsilon(1). CF(0) has three main subunits: a, b and c.

The protein localises to the cell inner membrane. Its function is as follows. Produces ATP from ADP in the presence of a proton gradient across the membrane. The gamma chain is believed to be important in regulating ATPase activity and the flow of protons through the CF(0) complex. The sequence is that of ATP synthase gamma chain from Campylobacter concisus (strain 13826).